The following is an 891-amino-acid chain: UPF0182 protein Glov_0814 (891 aa).

Helical transmembrane passes span 6-26, 51-71, 102-122, 164-184, 202-222, 244-264, and 266-286; these read LTPI…LLAY, GIGV…LLYA, IGVL…ALQW, FMLL…GGIA, ILLA…GFGL, TLTT…FGLW, and GTWR…MIGM.

Belongs to the UPF0182 family.

Its subcellular location is the cell membrane. This chain is UPF0182 protein Glov_0814, found in Trichlorobacter lovleyi (strain ATCC BAA-1151 / DSM 17278 / SZ) (Geobacter lovleyi).